The sequence spans 466 residues: Probable Xaa-Pro aminopeptidase pepP (466 aa).

Mn(2+)-binding residues include Asp-264, Asp-275, Glu-398, and Glu-438.

It belongs to the peptidase M24B family. Mn(2+) is required as a cofactor.

The catalysed reaction is Release of any N-terminal amino acid, including proline, that is linked to proline, even from a dipeptide or tripeptide.. In terms of biological role, catalyzes the removal of a penultimate prolyl residue from the N-termini of peptides. The sequence is that of Probable Xaa-Pro aminopeptidase pepP (pepP) from Aspergillus clavatus (strain ATCC 1007 / CBS 513.65 / DSM 816 / NCTC 3887 / NRRL 1 / QM 1276 / 107).